A 141-amino-acid chain; its full sequence is Large ribosomal subunit protein uL13 (141 aa).

The protein belongs to the universal ribosomal protein uL13 family. In terms of assembly, part of the 50S ribosomal subunit.

Functionally, this protein is one of the early assembly proteins of the 50S ribosomal subunit, although it is not seen to bind rRNA by itself. It is important during the early stages of 50S assembly. This chain is Large ribosomal subunit protein uL13, found in Deinococcus deserti (strain DSM 17065 / CIP 109153 / LMG 22923 / VCD115).